The following is a 485-amino-acid chain: N-succinylglutamate 5-semialdehyde dehydrogenase 2 (485 aa).

221 to 226 (GSAAAG) contributes to the NAD(+) binding site. Catalysis depends on residues E244 and C279.

The protein belongs to the aldehyde dehydrogenase family. AstD subfamily.

It catalyses the reaction N-succinyl-L-glutamate 5-semialdehyde + NAD(+) + H2O = N-succinyl-L-glutamate + NADH + 2 H(+). It participates in amino-acid degradation; L-arginine degradation via AST pathway; L-glutamate and succinate from L-arginine: step 4/5. Catalyzes the NAD-dependent reduction of succinylglutamate semialdehyde into succinylglutamate. The polypeptide is N-succinylglutamate 5-semialdehyde dehydrogenase 2 (Caulobacter vibrioides (strain ATCC 19089 / CIP 103742 / CB 15) (Caulobacter crescentus)).